A 1243-amino-acid polypeptide reads, in one-letter code: MGRRRIRSRIRKSHFYTFKCLRPKTLEDQGPHIINGPGYTRIVHCNQPHLHLAKVLRYTSNYVSTTRYNLITFLPKCLYEQFHRVANFYFLVAAILSVFPLSPFNKWSMIAPLIFVVGLSMGKEALEDWRRFMQDVKVNSRKATVHRGDGDFGRRKWKKLRVGDVVKVEKDQFFPADLLLLSSSYEDGICYVETMNLDGETNLKVKRCLDVTLPLERDDTFQSFSGTIKCEDPNPNLYTFVGNLEYDGQVYPLDPSQILLRDSKLRNTSYVYGVVVFTGHDTKVMQNSTKSPSKRSRIEKRMDYIIYTLFALLVLVSFISSLGFAVMTKMHMGDWWYLRPDKPERLTNPRNPFHAWVVHLITAVLLYGYLIPISLYVSIELVKVLQATFINQDLQMYDSESGTPAQARTSNLNEELGQVDTILSDKTGTLTCNQMDFLKCSIAGTSYGVRASEVELAAAKQMAIDLDEEQGEEVTHLPRTRGRMHGYAKMPSKTSSDIELETVITATDEGDQTQSTGIKGFSFEDQRLMGGNWLNEPNSDDILMFLRILAVCHTAIPEVDEDTGKCTYEAESPDEVAFLVAAGEFGFEFTKRTQSSVFISERHSGQPVEREYKVLNVLDFTSKRKRMSVIVRDEKGQILLLCKGADSIIFERLSKNGKNYLEATSKHLNGYGEAGLRTLALSYRKLDETEYSIWNSEFHKAKTSVGADRDEMLEKVSDMMEKELILVGATAVEDKLQKGVPQCIDKLAQAGLKIWVLTGDKMETAINIGYACSLLRQGMKQIYIALRNEEGSSQDPEAAARENILMQIINASQMIKLEKDPHAAFALIIDGKTLTYALEDDIKYQFLALAVDCASVICCRVSPKQKALVTRLAKEGTGKTTLAIGDGANDVGMIQEADIGVGISGVEGMQAVMASDFSIAQFRFLERLLVVHGHWCYKRIAQMICYFFYKNITFGLTLFYFEAFTGFSGQAIYNDSYLLLFNVILTSLPVIALGVFEQDVSSEVCLQFPALYQQGPKNLFFDWYRIIGWMANGVYASVVIFSLNIGIFHVQSFCSGGQTADMDAMGTAMFTCIIWAVNVQIALTMSHFTWIQHVLIWGSIVTWYIFLALFGMLPPKVSGNIFHMLSETLAPAPIFWLTSLLVIAATTLPYLAYISFQRSLNPLDHHIIQEIKHFRIDVQDECMWTRERSKAREKTKIGVTARVDAKIRQLRGRLQRKHSILSVMSGLSGVSASTDTTSTTQHS.

Topologically, residues 1 to 74 (MGRRRIRSRI…TTRYNLITFL (74 aa)) are cytoplasmic. A helical transmembrane segment spans residues 75–96 (PKCLYEQFHRVANFYFLVAAIL). Residues 97-100 (SVFP) lie on the Extracellular side of the membrane. The chain crosses the membrane as a helical span at residues 101-123 (LSPFNKWSMIAPLIFVVGLSMGK). The Cytoplasmic portion of the chain corresponds to 124 to 305 (EALEDWRRFM…SRIEKRMDYI (182 aa)). A helical transmembrane segment spans residues 306 to 327 (IYTLFALLVLVSFISSLGFAVM). Residues 328–359 (TKMHMGDWWYLRPDKPERLTNPRNPFHAWVVH) lie on the Extracellular side of the membrane. The helical transmembrane segment at 360-377 (LITAVLLYGYLIPISLYV) threads the bilayer. At 378–941 (SIELVKVLQA…HGHWCYKRIA (564 aa)) the chain is on the cytoplasmic side. The 4-aspartylphosphate intermediate role is filled by Asp-425. Lys-623 participates in a covalent cross-link: Glycyl lysine isopeptide (Lys-Gly) (interchain with G-Cter in ubiquitin). Mg(2+)-binding residues include Asp-886 and Asp-890. Residues 942-961 (QMICYFFYKNITFGLTLFYF) traverse the membrane as a helical segment. Over 962 to 975 (EAFTGFSGQAIYND) the chain is Extracellular. A helical membrane pass occupies residues 976–995 (SYLLLFNVILTSLPVIALGV). Topologically, residues 996–1025 (FEQDVSSEVCLQFPALYQQGPKNLFFDWYR) are cytoplasmic. The helical transmembrane segment at 1026-1048 (IIGWMANGVYASVVIFSLNIGIF) threads the bilayer. Over 1049-1061 (HVQSFCSGGQTAD) the chain is Extracellular. The helical transmembrane segment at 1062 to 1084 (MDAMGTAMFTCIIWAVNVQIALT) threads the bilayer. At 1085 to 1090 (MSHFTW) the chain is on the cytoplasmic side. The helical transmembrane segment at 1091–1111 (IQHVLIWGSIVTWYIFLALFG) threads the bilayer. Residues 1112 to 1128 (MLPPKVSGNIFHMLSET) lie on the Extracellular side of the membrane. The helical transmembrane segment at 1129-1153 (LAPAPIFWLTSLLVIAATTLPYLAY) threads the bilayer. The Cytoplasmic portion of the chain corresponds to 1154 to 1243 (ISFQRSLNPL…TDTTSTTQHS (90 aa)).

This sequence belongs to the cation transport ATPase (P-type) (TC 3.A.3) family. Type IV subfamily.

It is found in the cell membrane. The protein localises to the endomembrane system. It carries out the reaction ATP + H2O + phospholipidSide 1 = ADP + phosphate + phospholipidSide 2.. Functionally, involved in transport of phospholipids and in regulation of pollen plasma membrane lipid asymmetry. In Arabidopsis thaliana (Mouse-ear cress), this protein is Probable phospholipid-transporting ATPase 7.